The primary structure comprises 377 residues: Phospho-N-acetylmuramoyl-pentapeptide-transferase (377 aa).

Transmembrane regions (helical) follow at residues 9–29, 59–79, 85–105, 122–142, 155–175, 178–198, 210–230, 247–267, 274–294, 299–319, and 354–374; these read YITL…LVAG, TPTM…LLWA, FVWV…MDDY, FFWQ…AVSA, WVGS…VPFF, VSYP…IVGT, GLAI…AYVV, AAEL…FLWF, VFMG…IAVI, IVLF…MVQV, and QVVV…LSTL.

The protein belongs to the glycosyltransferase 4 family. MraY subfamily. It depends on Mg(2+) as a cofactor.

Its subcellular location is the cell inner membrane. It carries out the reaction UDP-N-acetyl-alpha-D-muramoyl-L-alanyl-gamma-D-glutamyl-meso-2,6-diaminopimeloyl-D-alanyl-D-alanine + di-trans,octa-cis-undecaprenyl phosphate = di-trans,octa-cis-undecaprenyl diphospho-N-acetyl-alpha-D-muramoyl-L-alanyl-D-glutamyl-meso-2,6-diaminopimeloyl-D-alanyl-D-alanine + UMP. It functions in the pathway cell wall biogenesis; peptidoglycan biosynthesis. Catalyzes the initial step of the lipid cycle reactions in the biosynthesis of the cell wall peptidoglycan: transfers peptidoglycan precursor phospho-MurNAc-pentapeptide from UDP-MurNAc-pentapeptide onto the lipid carrier undecaprenyl phosphate, yielding undecaprenyl-pyrophosphoryl-MurNAc-pentapeptide, known as lipid I. In Bordetella bronchiseptica (strain ATCC BAA-588 / NCTC 13252 / RB50) (Alcaligenes bronchisepticus), this protein is Phospho-N-acetylmuramoyl-pentapeptide-transferase.